A 302-amino-acid chain; its full sequence is Tyrosine recombinase XerC (302 aa).

The region spanning 6-90 is the Core-binding (CB) domain; that stretch reads DLEVTCLQDY…AIKQWGEFLL (85 aa). The region spanning 111–290 is the Tyr recombinase domain; the sequence is PLPKNMDVDS…DFQHLAKVYD (180 aa). Active-site residues include Arg-150, Lys-174, His-242, Arg-245, and His-268. The O-(3'-phospho-DNA)-tyrosine intermediate role is filled by Tyr-277.

Belongs to the 'phage' integrase family. XerC subfamily. As to quaternary structure, forms a cyclic heterotetrameric complex composed of two molecules of XerC and two molecules of XerD.

It is found in the cytoplasm. Site-specific tyrosine recombinase, which acts by catalyzing the cutting and rejoining of the recombining DNA molecules. The XerC-XerD complex is essential to convert dimers of the bacterial chromosome into monomers to permit their segregation at cell division. It also contributes to the segregational stability of plasmids. The chain is Tyrosine recombinase XerC from Shewanella putrefaciens (strain CN-32 / ATCC BAA-453).